Reading from the N-terminus, the 442-residue chain is ATP-dependent protease ATPase subunit HslU (442 aa).

ATP-binding positions include isoleucine 18, 60 to 65, aspartate 255, glutamate 320, and arginine 392; that span reads GVGKTE.

Belongs to the ClpX chaperone family. HslU subfamily. In terms of assembly, a double ring-shaped homohexamer of HslV is capped on each side by a ring-shaped HslU homohexamer. The assembly of the HslU/HslV complex is dependent on binding of ATP.

It is found in the cytoplasm. Functionally, ATPase subunit of a proteasome-like degradation complex; this subunit has chaperone activity. The binding of ATP and its subsequent hydrolysis by HslU are essential for unfolding of protein substrates subsequently hydrolyzed by HslV. HslU recognizes the N-terminal part of its protein substrates and unfolds these before they are guided to HslV for hydrolysis. This chain is ATP-dependent protease ATPase subunit HslU, found in Aeromonas salmonicida (strain A449).